The sequence spans 411 residues: Serpin A12 (411 aa).

Positions 1 to 20 (MNLVLGLGLFLAGLLTVKGL) are cleaved as a signal peptide. 2 N-linked (GlcNAc...) asparagine glycosylation sites follow: N92 and N267. Residues 364-382 (GTEGAAGSGAQTLPMETPR) form a reactive center loop region.

This sequence belongs to the serpin family. As to quaternary structure, forms a stable complex with KLK7. In terms of processing, glycosylation slightly decreases affinity for heparin, but otherwise has no significant effect on KLK7 inhibitory activity or thermal stability of the protein. Expressed in visceral adipose tissues.

It localises to the secreted. With respect to regulation, inhibition of KLK7 is enhanced by heparin. Functionally, adipokine that modulates insulin action by specifically inhibiting its target protease KLK7 in white adipose tissues. The protein is Serpin A12 (Serpina12) of Rattus norvegicus (Rat).